Here is a 371-residue protein sequence, read N- to C-terminus: MAATCEISNIFSNYFSAMYSSEDSTLASVPPAATFGADDLVLTLSNPQMSLEGTEKASWLGEQPQFWSKTQVLDWISYQVEKNKYDASAIDFSRCDMDGATLCNCALEELRLVFGPLGDQLHAQLRDLTSSSSDELSWIIELLEKDGMAFQEALDPGPFDQGSPFAQELLDDGQQASPYHPGSCGAGAPSPGSSDVSTAGTGASRSSHSSDSGGSDVDLDPTDGKLFPSDGFRDCKKGDPKHGKRKRGRPRKLSKEYWDCLEGKKSKHAPRGTHLWEFIRDILIHPELNEGLMKWENRHEGVFKFLRSEAVAQLWGQKKKNSNMTYEKLSRAMRYYYKREILERVDGRRLVYKFGKNSSGWKEEEVLQSRN.

Positions 46 to 132 constitute a PNT domain; sequence NPQMSLEGTE…AQLRDLTSSS (87 aa). A 9aaTAD motif is present at residues 137-145; the sequence is SWIIELLEK. Positions 173–251 are disordered; it reads GQQASPYHPG…HGKRKRGRPR (79 aa). Positions 181–216 are enriched in low complexity; the sequence is PGSCGAGAPSPGSSDVSTAGTGASRSSHSSDSGGSD. Residues 231 to 241 are compositionally biased toward basic and acidic residues; it reads GFRDCKKGDPK. The span at 242–251 shows a compositional bias: basic residues; the sequence is HGKRKRGRPR. Positions 273 to 355 form a DNA-binding region, ETS; sequence THLWEFIRDI…DGRRLVYKFG (83 aa).

The protein belongs to the ETS family. Interacts with TBP. Interacts with CREBBP and EP300; these act as transcriptional coactivators of ELF3 and positively modulate its function. Interacts with XRCC5/KU86 and XRCC6/KU70; these inhibit the ability of ELF3 to bind DNA and negatively modulate its transcriptional activity. Associated with CLND7 and POU2F3. Interacts with ZNF768. As to expression, expressed exclusively in tissues containing a high content of terminally differentiated epithelial cells including mammary gland, colon, trachea, kidney, prostate, uterus, stomach and skin.

The protein localises to the cytoplasm. The protein resides in the nucleus. Its function is as follows. Transcriptional activator that binds and transactivates ETS sequences containing the consensus nucleotide core sequence GGA[AT]. Acts synergistically with POU2F3 to transactivate the SPRR2A promoter and with RUNX1 to transactivate the ANGPT1 promoter. Also transactivates collagenase, CCL20, CLND7, FLG, KRT8, NOS2, PTGS2, SPRR2B, TGFBR2 and TGM3 promoters. Represses KRT4 promoter activity. Involved in mediating vascular inflammation. May play an important role in epithelial cell differentiation and tumorigenesis. May be a critical downstream effector of the ERBB2 signaling pathway. May be associated with mammary gland development and involution. Plays an important role in the regulation of transcription with TATA-less promoters in preimplantation embryos, which is essential in preimplantation development. The polypeptide is ETS-related transcription factor Elf-3 (Homo sapiens (Human)).